A 488-amino-acid polypeptide reads, in one-letter code: C2H2-type transcription factor MSN2 (488 aa).

C2H2-type zinc fingers lie at residues 376–399 (FVCDLCNRRFRRQEHLKRHYRSLH) and 405–427 (FECNECGKKFSRSDNLAQHARTH).

The protein resides in the nucleus. It localises to the cytoplasm. Transcription factor that acts as a key downstream transcription factor in the HOG1-MAPK pathway. Plays crucial roles in the regulation of conidiation, virulence and multi-stress responses. Acts as a negative regulator of proteases, lipases, as well as of the red-pigmented oosporein production, and contributes to virulence and growth in response to external pH. Contributes to the ability to infect Rhipicephalus microplus (Acari, Ixodidae) via the cuticle-penetration requiring route involving proteolytic activity at the host cuticle. Does not seem to be involved in subsequent growth and proliferation once the tick cuticle has been breached. This Beauveria bassiana (strain ARSEF 2860) (White muscardine disease fungus) protein is C2H2-type transcription factor MSN2.